Reading from the N-terminus, the 318-residue chain is Probable serine/threonine-protein kinase MRK1 homolog (318 aa).

The Protein kinase domain maps to Y40 to F313. Residues I46–V54 and K68 contribute to the ATP site. The Proton acceptor role is filled by D159.

The protein belongs to the protein kinase superfamily. CMGC Ser/Thr protein kinase family. GSK-3 subfamily.

It localises to the cytoplasm. Its subcellular location is the nucleus. The catalysed reaction is L-seryl-[protein] + ATP = O-phospho-L-seryl-[protein] + ADP + H(+). The enzyme catalyses L-threonyl-[protein] + ATP = O-phospho-L-threonyl-[protein] + ADP + H(+). Functionally, may play a role in the initiation and completion of mitosis. The sequence is that of Probable serine/threonine-protein kinase MRK1 homolog (MRK1) from Encephalitozoon cuniculi (strain GB-M1) (Microsporidian parasite).